A 299-amino-acid chain; its full sequence is Bifunctional protein FolD (299 aa).

Residues 168–170 (GRS), serine 193, and isoleucine 234 contribute to the NADP(+) site.

It belongs to the tetrahydrofolate dehydrogenase/cyclohydrolase family. In terms of assembly, homodimer.

The catalysed reaction is (6R)-5,10-methylene-5,6,7,8-tetrahydrofolate + NADP(+) = (6R)-5,10-methenyltetrahydrofolate + NADPH. The enzyme catalyses (6R)-5,10-methenyltetrahydrofolate + H2O = (6R)-10-formyltetrahydrofolate + H(+). It participates in one-carbon metabolism; tetrahydrofolate interconversion. In terms of biological role, catalyzes the oxidation of 5,10-methylenetetrahydrofolate to 5,10-methenyltetrahydrofolate and then the hydrolysis of 5,10-methenyltetrahydrofolate to 10-formyltetrahydrofolate. The protein is Bifunctional protein FolD of Bartonella henselae (strain ATCC 49882 / DSM 28221 / CCUG 30454 / Houston 1) (Rochalimaea henselae).